The primary structure comprises 198 residues: tRNA (pseudouridine(54)-N(1))-methyltransferase (198 aa).

S-adenosyl-L-methionine contacts are provided by residues leucine 130, glycine 153, 176 to 181 (LSPLEL), and cysteine 186.

This sequence belongs to the methyltransferase superfamily. TrmY family. As to quaternary structure, homodimer.

It is found in the cytoplasm. The catalysed reaction is pseudouridine(54) in tRNA + S-adenosyl-L-methionine = N(1)-methylpseudouridine(54) in tRNA + S-adenosyl-L-homocysteine + H(+). In terms of biological role, specifically catalyzes the N1-methylation of pseudouridine at position 54 (Psi54) in tRNAs. The protein is tRNA (pseudouridine(54)-N(1))-methyltransferase of Methanococcus vannielii (strain ATCC 35089 / DSM 1224 / JCM 13029 / OCM 148 / SB).